The primary structure comprises 323 residues: tRNA(Ile)-lysidine synthase (323 aa).

An ATP-binding site is contributed by 33 to 38; it reads SGGSDS.

The protein belongs to the tRNA(Ile)-lysidine synthase family.

It is found in the cytoplasm. It catalyses the reaction cytidine(34) in tRNA(Ile2) + L-lysine + ATP = lysidine(34) in tRNA(Ile2) + AMP + diphosphate + H(+). Its function is as follows. Ligates lysine onto the cytidine present at position 34 of the AUA codon-specific tRNA(Ile) that contains the anticodon CAU, in an ATP-dependent manner. Cytidine is converted to lysidine, thus changing the amino acid specificity of the tRNA from methionine to isoleucine. This Mycobacterium leprae (strain TN) protein is tRNA(Ile)-lysidine synthase.